The primary structure comprises 432 residues: Adenylosuccinate synthetase (432 aa).

GTP is bound by residues 13–19 and 41–43; these read GDEGKGK and GHT. Asp-14 (proton acceptor) is an active-site residue. Positions 14 and 41 each coordinate Mg(2+). Residues 14 to 17, 39 to 42, Thr-130, Arg-144, Gln-225, Thr-240, and Arg-304 each bind IMP; these read DEGK and NAGH. His-42 serves as the catalytic Proton donor. A substrate-binding site is contributed by 300-306; the sequence is ATTGRRR. GTP is bound by residues Arg-306, 332 to 334, and 415 to 417; these read KLD and STG.

This sequence belongs to the adenylosuccinate synthetase family. Homodimer. It depends on Mg(2+) as a cofactor.

The protein localises to the cytoplasm. It carries out the reaction IMP + L-aspartate + GTP = N(6)-(1,2-dicarboxyethyl)-AMP + GDP + phosphate + 2 H(+). Its pathway is purine metabolism; AMP biosynthesis via de novo pathway; AMP from IMP: step 1/2. Its function is as follows. Plays an important role in the de novo pathway of purine nucleotide biosynthesis. Catalyzes the first committed step in the biosynthesis of AMP from IMP. The chain is Adenylosuccinate synthetase from Pectobacterium carotovorum subsp. carotovorum (strain PC1).